A 296-amino-acid polypeptide reads, in one-letter code: Nucleotide-binding protein SPJ_1472 (296 aa).

13–20 is an ATP binding site; sequence GMSGAGKT. GTP is bound at residue 63–66; it reads DMRS.

This sequence belongs to the RapZ-like family.

Functionally, displays ATPase and GTPase activities. The chain is Nucleotide-binding protein SPJ_1472 from Streptococcus pneumoniae (strain JJA).